Here is a 350-residue protein sequence, read N- to C-terminus: tRNA uridine(34) hydroxylase (350 aa).

In terms of domain architecture, Rhodanese spans 128-221; sequence EETDYVMIDT…YMKEYPNDQF (94 aa). Cys181 acts as the Cysteine persulfide intermediate in catalysis.

Belongs to the TrhO family.

The catalysed reaction is uridine(34) in tRNA + AH2 + O2 = 5-hydroxyuridine(34) in tRNA + A + H2O. In terms of biological role, catalyzes oxygen-dependent 5-hydroxyuridine (ho5U) modification at position 34 in tRNAs. The chain is tRNA uridine(34) hydroxylase from Bdellovibrio bacteriovorus (strain ATCC 15356 / DSM 50701 / NCIMB 9529 / HD100).